The primary structure comprises 504 residues: Glycerol kinase (504 aa).

T12 lines the ADP pocket. ATP-binding residues include T12, T13, and S14. T12 contacts sn-glycerol 3-phosphate. Residue R16 participates in ADP binding. R82, E83, Y134, and D244 together coordinate sn-glycerol 3-phosphate. Glycerol contacts are provided by R82, E83, Y134, D244, and Q245. 2 residues coordinate ADP: T266 and G309. Positions 266, 309, 313, and 410 each coordinate ATP. ADP contacts are provided by G410 and N414.

The protein belongs to the FGGY kinase family. Homotetramer and homodimer (in equilibrium).

It carries out the reaction glycerol + ATP = sn-glycerol 3-phosphate + ADP + H(+). It functions in the pathway polyol metabolism; glycerol degradation via glycerol kinase pathway; sn-glycerol 3-phosphate from glycerol: step 1/1. Activated by phosphorylation and inhibited by fructose 1,6-bisphosphate (FBP). Its function is as follows. Key enzyme in the regulation of glycerol uptake and metabolism. Catalyzes the phosphorylation of glycerol to yield sn-glycerol 3-phosphate. This is Glycerol kinase from Alkaliphilus oremlandii (strain OhILAs) (Clostridium oremlandii (strain OhILAs)).